Reading from the N-terminus, the 430-residue chain is Trigger factor (430 aa).

The 86-residue stretch at 157 to 242 (GDLVALETWS…AVEVSEPVLP (86 aa)) folds into the PPIase FKBP-type domain.

This sequence belongs to the FKBP-type PPIase family. Tig subfamily.

It is found in the cytoplasm. The catalysed reaction is [protein]-peptidylproline (omega=180) = [protein]-peptidylproline (omega=0). In terms of biological role, involved in protein export. Acts as a chaperone by maintaining the newly synthesized protein in an open conformation. Functions as a peptidyl-prolyl cis-trans isomerase. This chain is Trigger factor, found in Xanthomonas campestris pv. campestris (strain B100).